A 265-amino-acid polypeptide reads, in one-letter code: MTVAKRIIPCLDVDGGRVVKGVKFVDIRDAGDPVEIARRYDAMGADEITFLDITASHERRDTMVQVVEKVASQVFIPLTVGGGIREVADIRRMLNAGADKVGINTAAVARPEFVAEAAERFGSQCIVVAVDAKQVSRADEPARWEVFTHGGRKATGLDAVEWAGRMAELGAGEILLTSMDRDGTQAGFDLALTRAVSDAVPVPVIASGGVGTLSDLADGVLEGGADAVLAASIFHFGRYTVAEAKRLMAERGITVRITGDERTDV.

Active-site residues include Asp12 and Asp131.

This sequence belongs to the HisA/HisF family. Heterodimer of HisH and HisF.

The protein resides in the cytoplasm. The catalysed reaction is 5-[(5-phospho-1-deoxy-D-ribulos-1-ylimino)methylamino]-1-(5-phospho-beta-D-ribosyl)imidazole-4-carboxamide + L-glutamine = D-erythro-1-(imidazol-4-yl)glycerol 3-phosphate + 5-amino-1-(5-phospho-beta-D-ribosyl)imidazole-4-carboxamide + L-glutamate + H(+). The protein operates within amino-acid biosynthesis; L-histidine biosynthesis; L-histidine from 5-phospho-alpha-D-ribose 1-diphosphate: step 5/9. Its function is as follows. IGPS catalyzes the conversion of PRFAR and glutamine to IGP, AICAR and glutamate. The HisF subunit catalyzes the cyclization activity that produces IGP and AICAR from PRFAR using the ammonia provided by the HisH subunit. The sequence is that of Imidazole glycerol phosphate synthase subunit HisF from Alkalilimnicola ehrlichii (strain ATCC BAA-1101 / DSM 17681 / MLHE-1).